Consider the following 396-residue polypeptide: MKKNILLLFLVHGANYLFPFIVLPYQTRILSIETFADVAKIQAAVMLLSLIVNYGYNLSSTRAIARAVSQAEINKIYSETLIVKLLLATICLALGCVHLMYVKEYSLIYPFIISSIYLYGSALFATWLFQGLEKMKAVVIATTIAKLTGVILTFILVKSPNDIVAALFTQNIGMFISGIISIYLVRKNKYATVICFRLKNIIVSLKEAWPFFLSLAATSVYTYFNVILLSFYAGDYVVANFNAADKLRMAAQGLLIPIGQAVFPRLSKLEGYEYSSKLKIYAIRYAIFGVCISAGLVFLGPMLTTIYLGKEYSLSGEYLQSMFLLPATISISTILSQWMLIPQGKEKILSRIYILGAIVHLLYAFPLVYYYGAWGMVISILFTEVLIVLFMLKAVK.

The next 11 helical transmembrane spans lie at 5–25 (ILLL…VLPY), 32–52 (IETF…SLIV), 82–102 (IVKL…LMYV), 107–127 (LIYP…FATW), 137–157 (AVVI…FILV), 163–183 (IVAA…ISIY), 211–231 (FFLS…LLSF), 286–306 (AIFG…LTTI), 322–342 (MFLL…MLIP), 348–368 (ILSR…FPLV), and 372–392 (GAWG…LFML).

The protein belongs to the polysaccharide synthase family.

The protein localises to the cell inner membrane. Its pathway is bacterial outer membrane biogenesis; LPS O-antigen biosynthesis. In terms of biological role, may be involved in the translocation process of the nascent O-polysaccharide molecules and/or its ligation to lipid A core units. This Shigella dysenteriae protein is Putative O-antigen transporter (rfbX).